Here is a 1003-residue protein sequence, read N- to C-terminus: Calcium-transporting ATPase sarcoplasmic/endoplasmic reticulum type (1003 aa).

The Cytoplasmic portion of the chain corresponds to 1–59; the sequence is MEDAHAKKWEEVVDYFGVDPERGLALEQVKKNQEKYGPNELPAEEGKSLLTLILEQFDD. The helical transmembrane segment at 60-78 threads the bilayer; sequence LLVKILLLAAIISLVLALF. The Extracellular segment spans residues 79–89; it reads EEHDDEAEQLT. The helical transmembrane segment at 90 to 110 threads the bilayer; that stretch reads AYVEPFVILLILIANAVVGVW. Residues 111-262 lie on the Cytoplasmic side of the membrane; it reads QEKNAESAIE…QQKLDEFGEQ (152 aa). The chain crosses the membrane as a helical span at residues 263–282; that stretch reads LSKVISVICVAVWAINIGHF. Over 283–300 the chain is Extracellular; sequence NDPAHGGSWIKGAIYYFK. A helical transmembrane segment spans residues 301–318; the sequence is IAVALAVAAIPEGLPAVI. Residues 319–775 lie on the Cytoplasmic side of the membrane; it reads TTCLALGTRR…RYLISSNIGE (457 aa). The active-site 4-aspartylphosphate intermediate is the aspartate 354. Position 519 (lysine 519) interacts with ATP. A helical membrane pass occupies residues 776 to 799; the sequence is VVSIFLTAALGLPEALIPVQLLWV. Topologically, residues 800 to 840 are extracellular; it reads NLVTDGLPATALGFNPPDLDIMNKPPRRADEGLITGWLFFR. The helical transmembrane segment at 841–863 threads the bilayer; that stretch reads YMAIGTYVGAATVGAAAHWFMMS. Residues 864–898 lie on the Cytoplasmic side of the membrane; it reads PTGPGLNFYQLSHHLQCTPENEYFEGIDCEIFSDP. Residues 899-917 form a helical membrane-spanning segment; that stretch reads HPMTMALSVLVTIEMLNAI. Topologically, residues 918-934 are extracellular; it reads NSLSENQSLLVMPPWSN. A helical membrane pass occupies residues 935–954; that stretch reads IWLISAICLSMTLHFVILYV. Residues 955-1003 lie on the Cytoplasmic side of the membrane; it reads EILSTVFQICPLTLTEWIVVLKISFPVLLLDEVLKFVARKYTDEFSFIK.

The protein belongs to the cation transport ATPase (P-type) (TC 3.A.3) family.

The protein localises to the sarcoplasmic reticulum membrane. The catalysed reaction is Ca(2+)(in) + ATP + H2O = Ca(2+)(out) + ADP + phosphate + H(+). In terms of biological role, this magnesium-dependent enzyme catalyzes the hydrolysis of ATP coupled with the transport of the calcium. This is Calcium-transporting ATPase sarcoplasmic/endoplasmic reticulum type from Artemia franciscana (Brine shrimp).